We begin with the raw amino-acid sequence, 116 residues long: Putative pterin-4-alpha-carbinolamine dehydratase (116 aa).

This sequence belongs to the pterin-4-alpha-carbinolamine dehydratase family.

The enzyme catalyses (4aS,6R)-4a-hydroxy-L-erythro-5,6,7,8-tetrahydrobiopterin = (6R)-L-erythro-6,7-dihydrobiopterin + H2O. The polypeptide is Putative pterin-4-alpha-carbinolamine dehydratase (Xylella fastidiosa (strain M12)).